The following is a 294-amino-acid chain: Tetraspanin-15 (294 aa).

At 1–23 (MPRGDSEQVRYCARFSYLWLKFS) the chain is on the cytoplasmic side. The chain crosses the membrane as a helical span at residues 24–44 (LIIYSTVFWLIGGLVLSVGIY). The Extracellular portion of the chain corresponds to 45–62 (AEAERQKYKTLESAFLAP). A helical transmembrane segment spans residues 63–83 (AIILILLGVVMFIVSFIGVLA). The Cytoplasmic portion of the chain corresponds to 84 to 94 (SLRDNLCLLQS). Residues 95–115 (FMYILGICLVMELIGGIVALI) form a helical membrane-spanning segment. At 116 to 235 (FRNQTIDFLN…WFMDNYTIMA (120 aa)) the chain is on the extracellular side. Residue Asn-118 is glycosylated (N-linked (GlcNAc...) asparagine). Cystine bridges form between Cys-154–Cys-219, Cys-155–Cys-185, Cys-171–Cys-179, and Cys-186–Cys-198. Residues Asn-189 and Asn-230 are each glycosylated (N-linked (GlcNAc...) asparagine). The chain crosses the membrane as a helical span at residues 236–256 (GLLLGILLPQFLGVLLTLLYI). The Cytoplasmic segment spans residues 257–294 (TRVEDIILEHSVTDGLLGPGAKSRTDTAGTGCCLCYPD).

This sequence belongs to the tetraspanin (TM4SF) family. In terms of assembly, interacts with ADAM10; the interaction influences ADAM10 substrate specificity, endocytosis and turnover. In terms of processing, palmitoylated.

It is found in the cell membrane. The protein resides in the late endosome membrane. Its function is as follows. Part of TspanC8 subgroup, composed of 6 members that interact with the transmembrane metalloprotease ADAM10. This interaction is required for ADAM10 exit from the endoplasmic reticulum and for enzymatic maturation and trafficking to the cell surface as well as substrate specificity. Different TspanC8/ADAM10 complexes have distinct substrates. Promotes ADAM10-mediated cleavage of CDH2. Negatively regulates ligand-induced Notch activity probably by regulating ADAM10 activity. In Mus musculus (Mouse), this protein is Tetraspanin-15 (Tspan15).